Here is a 477-residue protein sequence, read N- to C-terminus: Bifunctional protein HldE (477 aa).

The interval 1–318 is ribokinase; it reads MKVNLPAFER…ENAVRGRADT (318 aa). Residue 195 to 198 coordinates ATP; it reads NLSE. Asp264 is a catalytic residue. The interval 344–477 is cytidylyltransferase; it reads MTNGVFDILH…IKKIQTESEK (134 aa).

In the N-terminal section; belongs to the carbohydrate kinase PfkB family. This sequence in the C-terminal section; belongs to the cytidylyltransferase family. As to quaternary structure, homodimer.

It carries out the reaction D-glycero-beta-D-manno-heptose 7-phosphate + ATP = D-glycero-beta-D-manno-heptose 1,7-bisphosphate + ADP + H(+). The catalysed reaction is D-glycero-beta-D-manno-heptose 1-phosphate + ATP + H(+) = ADP-D-glycero-beta-D-manno-heptose + diphosphate. It participates in nucleotide-sugar biosynthesis; ADP-L-glycero-beta-D-manno-heptose biosynthesis; ADP-L-glycero-beta-D-manno-heptose from D-glycero-beta-D-manno-heptose 7-phosphate: step 1/4. The protein operates within nucleotide-sugar biosynthesis; ADP-L-glycero-beta-D-manno-heptose biosynthesis; ADP-L-glycero-beta-D-manno-heptose from D-glycero-beta-D-manno-heptose 7-phosphate: step 3/4. Its function is as follows. Catalyzes the phosphorylation of D-glycero-D-manno-heptose 7-phosphate at the C-1 position to selectively form D-glycero-beta-D-manno-heptose-1,7-bisphosphate. In terms of biological role, catalyzes the ADP transfer from ATP to D-glycero-beta-D-manno-heptose 1-phosphate, yielding ADP-D-glycero-beta-D-manno-heptose. The protein is Bifunctional protein HldE of Salmonella paratyphi A (strain ATCC 9150 / SARB42).